The primary structure comprises 474 residues: Hepatocyte nuclear factor 4-alpha (474 aa).

Residues Ser-57–Asn-132 constitute a DNA-binding region (nuclear receptor). 2 NR C4-type zinc fingers span residues Cys-60–Cys-80 and Cys-96–Cys-120. Residues Ser-142 and Ser-143 each carry the phosphoserine modification. Tyr-144 carries the post-translational modification Phosphotyrosine. The region spanning Ser-147–Gly-377 is the NR LBD domain. Residue Thr-166 is modified to Phosphothreonine. Ser-167 is modified (phosphoserine). Residues Lys-234 and Lys-307 each participate in a glycyl lysine isopeptide (Lys-Gly) (interchain with G-Cter in ubiquitin) cross-link. A Phosphoserine; by AMPK modification is found at Ser-313. Positions Asn-368–Gly-376 match the 9aaTAD motif. A disordered region spans residues Glu-419–Lys-447. A phosphothreonine mark is found at Thr-429 and Thr-432. Phosphoserine is present on Ser-436. Residue Lys-458 is modified to N6-acetyllysine.

It belongs to the nuclear hormone receptor family. NR2 subfamily. As to quaternary structure, homodimerization is required for HNF4-alpha to bind to its recognition site. Interacts with CLOCK, BMAL1, CRY1, CRY2, PER1 and PER2. Interacts with NR0B2/SHP; the resulting heterodimer is transcriptionally inactive. Interacts with DDX3X; this interaction disrupts the interaction between HNF4 and NR0B2 that forms inactive heterodimers and enhances the formation of active HNF4 homodimers. Phosphorylated on tyrosine residue(s); phosphorylation is important for its DNA-binding activity. Phosphorylation may directly or indirectly play a regulatory role in the subnuclear distribution. Phosphorylation at Ser-313 by AMPK reduces the ability to form homodimers and bind DNA. In terms of processing, acetylation at Lys-458 lowers transcriptional activation by about two-fold.

The protein resides in the nucleus. In terms of biological role, transcriptional regulator which controls the expression of hepatic genes during the transition of endodermal cells to hepatic progenitor cells, facilitating the recruitment of RNA pol II to the promoters of target genes. Activates the transcription of CYP2C38. Represses the CLOCK-BMAL1 transcriptional activity and is essential for circadian rhythm maintenance and period regulation in the liver and colon cells. This is Hepatocyte nuclear factor 4-alpha (HNF4A) from Homo sapiens (Human).